Here is a 550-residue protein sequence, read N- to C-terminus: Tether containing UBX domain for GLUT4 (550 aa).

At Ala-2 the chain carries N-acetylalanine. Residues 185-320 are disordered; that stretch reads AVRSKAPGSP…EPPVDRDPVV (136 aa). Residue Ser-193 is modified to Phosphoserine. Residues 193–206 are compositionally biased toward low complexity; it reads SPVSSLSADQASSS. Positions 217–226 are enriched in basic and acidic residues; sequence SRGDLNHEGD. The segment covering 242-252 has biased composition (polar residues); the sequence is DAQTKQSTSEP. An interaction with GLUT4 region spans residues 313 to 376; sequence PVDRDPVVYH…LVTKAFREAQ (64 aa). The UBX domain maps to 382-458; sequence ERYPKVALRV…NLFPAALVHF (77 aa). Phosphoserine is present on Ser-496. Residues 496 to 550 are disordered; the sequence is SPPLLPAPDPVSLESEPIAEDGALGPPEPIQGTAQPVKRSLGKVPKWLKLPASKR.

Interacts with VCP. Interacts with VCPKMT. Interacts with GLUT4. In terms of tissue distribution, ubiquitous.

It localises to the endomembrane system. Its subcellular location is the endoplasmic reticulum-Golgi intermediate compartment membrane. It is found in the cytoplasm. The protein localises to the nucleus. Its function is as follows. Enhances VCP methylation catalyzed by VCPKMT. Tethering protein that sequesters GLUT4-containing vesicles in the cytoplasm in the absence of insulin. Modulates the amount of GLUT4 that is available at the cell surface. This is Tether containing UBX domain for GLUT4 (Aspscr1) from Mus musculus (Mouse).